A 245-amino-acid chain; its full sequence is MNVTLLIPARYGSSRFPGKPLAPINGKPMIQHVYERASLAKGLTAIYVATDDDRIKDAVEGFGGKVVMTSPDAASGTDRIEDAITQLGLKDDDLVVNLQGDQPLIDPISIEQIISLFERHPGEFGMATLGFEITEKCELDDPKHVKMVFDNEFNALYFSRARIPFGRDTNDYPVYKHLGVYAYTRSFISTFAKLPLGRLEDLEKLEQLRALEHGYKIKVAISAFDSPEVDTPEDIRVCESRLAVD.

The protein belongs to the KdsB family.

The protein localises to the cytoplasm. It catalyses the reaction 8-amino-3,8-dideoxy-alpha-D-manno-octulosonate + CTP = CMP-8-amino-3,8-dideoxy-alpha-D-manno-oct-2-ulosonate + diphosphate. It participates in bacterial outer membrane biogenesis; lipopolysaccharide biosynthesis. Functionally, activates KDO8N (a required 8-carbon sugar) for incorporation into bacterial lipopolysaccharide in the Shewanella genus. This chain is 8-amino-3,8-dideoxy-manno-octulosonate cytidylyltransferase, found in Shewanella sediminis (strain HAW-EB3).